The sequence spans 41 residues: Large ribosomal subunit protein bL36 (41 aa).

Belongs to the bacterial ribosomal protein bL36 family.

The polypeptide is Large ribosomal subunit protein bL36 (Methylobacterium nodulans (strain LMG 21967 / CNCM I-2342 / ORS 2060)).